The sequence spans 506 residues: Pleckstrin homology domain-containing family D member 1 (506 aa).

A PH domain is found at 28–136; it reads KVQLYGVLWK…WLEMLQESGK (109 aa). A coiled-coil region spans residues 146-391; that stretch reads EAMIKSLEAQ…KVRNKEKEER (246 aa). R503 is subject to Omega-N-methylarginine.

The protein belongs to the PLEKHD1 family.

The protein is Pleckstrin homology domain-containing family D member 1 (PLEKHD1) of Homo sapiens (Human).